A 374-amino-acid chain; its full sequence is MANKVIKCKAAVAWEAGKPLSIEEIEVAPPKAHEVRIKIFATAVCHTDAYTLSGADPEGCFPVILGHEGAGIVESVGEGVTNLKAGDTVIPLYIPQCGECKFCLNPKTNLCQKIRVTQGKGLMPDGTSRFTCKGKTILHYMGTSTFSEYTVVADISVAKIDPSAPLDKVCLLGCGISTGYGAALNTAKVEPGSTCAVFGLGGVGLAAIMGCKAAGASRIIAVDINKDKFARAKEFGATECINPQDFSKPIQEVLVEKTDGGVDYSFECIGNVKVMRAALEACHKGWGVSVVVGVAGAGEEISTRPFQLVTGRTWKGTAFGGWKSVESVPKLVSEYMSKKINVDEFVTNTLSFDQINEAFELMHSGKSIRTVVKI.

A2 carries the N-acetylalanine modification. 7 residues coordinate Zn(2+): C45, H67, C97, C100, C103, C111, and C174. The residue at position 233 (K233) is an N6-succinyllysine. S247 carries the phosphoserine modification. Residue K315 is modified to N6-succinyllysine. Residues S324 and S351 each carry the phosphoserine modification.

The protein belongs to the zinc-containing alcohol dehydrogenase family. Class-III subfamily. Homodimer. The cofactor is Zn(2+).

It is found in the cytoplasm. The enzyme catalyses a primary alcohol + NAD(+) = an aldehyde + NADH + H(+). It carries out the reaction a secondary alcohol + NAD(+) = a ketone + NADH + H(+). It catalyses the reaction S-(hydroxymethyl)glutathione + NADP(+) = S-formylglutathione + NADPH + H(+). The catalysed reaction is S-(hydroxymethyl)glutathione + NAD(+) = S-formylglutathione + NADH + H(+). The enzyme catalyses 20-oxo-(5Z,8Z,11Z,14Z)-eicosatetraenoate + NAD(+) + H2O = (5Z,8Z,11Z,14Z)-eicosatetraenedioate + NADH + 2 H(+). It carries out the reaction 20-hydroxy-(5Z,8Z,11Z,14Z)-eicosatetraenoate + NAD(+) = 20-oxo-(5Z,8Z,11Z,14Z)-eicosatetraenoate + NADH + H(+). It catalyses the reaction S-nitrosoglutathione + NADH + H(+) = S-(hydroxysulfenamide)glutathione + NAD(+). In terms of biological role, catalyzes the oxidation of long-chain primary alcohols and the oxidation of S-(hydroxymethyl) glutathione. Also oxidizes long chain omega-hydroxy fatty acids, such as 20-HETE, producing both the intermediate aldehyde, 20-oxoarachidonate and the end product, a dicarboxylic acid, (5Z,8Z,11Z,14Z)-eicosatetraenedioate. Class-III ADH is remarkably ineffective in oxidizing ethanol. Required for clearance of cellular formaldehyde, a cytotoxic and carcinogenic metabolite that induces DNA damage. Also acts as a S-nitroso-glutathione reductase by catalyzing the NADH-dependent reduction of S-nitrosoglutathione, thereby regulating protein S-nitrosylation. This Oryctolagus cuniculus (Rabbit) protein is Alcohol dehydrogenase class-3.